A 238-amino-acid chain; its full sequence is NADH-quinone oxidoreductase subunit C (238 aa).

A compositionally biased stretch (polar residues) spans 1-11 (MSTSNGSANGT). Positions 1 to 20 (MSTSNGSANGTNGVGLPRGD) are disordered.

Belongs to the complex I 30 kDa subunit family. As to quaternary structure, NDH-1 is composed of 14 different subunits. Subunits NuoB, C, D, E, F, and G constitute the peripheral sector of the complex.

The protein resides in the cell membrane. The catalysed reaction is a quinone + NADH + 5 H(+)(in) = a quinol + NAD(+) + 4 H(+)(out). Functionally, NDH-1 shuttles electrons from NADH, via FMN and iron-sulfur (Fe-S) centers, to quinones in the respiratory chain. The immediate electron acceptor for the enzyme in this species is believed to be a menaquinone. Couples the redox reaction to proton translocation (for every two electrons transferred, four hydrogen ions are translocated across the cytoplasmic membrane), and thus conserves the redox energy in a proton gradient. The sequence is that of NADH-quinone oxidoreductase subunit C from Mycolicibacterium smegmatis (strain ATCC 700084 / mc(2)155) (Mycobacterium smegmatis).